The following is a 304-amino-acid chain: Bifunctional protein FolD (304 aa).

NADP(+) contacts are provided by residues 170–172 (GRS), Ser195, and Ile236.

Belongs to the tetrahydrofolate dehydrogenase/cyclohydrolase family. In terms of assembly, homodimer.

The catalysed reaction is (6R)-5,10-methylene-5,6,7,8-tetrahydrofolate + NADP(+) = (6R)-5,10-methenyltetrahydrofolate + NADPH. The enzyme catalyses (6R)-5,10-methenyltetrahydrofolate + H2O = (6R)-10-formyltetrahydrofolate + H(+). Its pathway is one-carbon metabolism; tetrahydrofolate interconversion. Functionally, catalyzes the oxidation of 5,10-methylenetetrahydrofolate to 5,10-methenyltetrahydrofolate and then the hydrolysis of 5,10-methenyltetrahydrofolate to 10-formyltetrahydrofolate. The chain is Bifunctional protein FolD from Anaplasma phagocytophilum (strain HZ).